Consider the following 142-residue polypeptide: gSG7 salivary protein (142 aa).

Positions 1–26 (MAARMTIMLPLAVALICLLQTEPGMA) are cleaved as a signal peptide. 2 disulfide bridges follow: cysteine 84/cysteine 139 and cysteine 107/cysteine 117.

The protein localises to the secreted. In terms of biological role, salivary protein that moderately inhibits the alternative pathway for complement system activation in the host. The chain is gSG7 salivary protein from Anopheles darlingi (Mosquito).